The chain runs to 159 residues: H/ACA ribonucleoprotein complex subunit 2-like protein (159 aa).

The disordered stretch occupies residues 1 to 28 (MAKTPKKDKTEEKEEHEESGGNKEDRER).

The protein belongs to the eukaryotic ribosomal protein eL8 family. Component of the small nucleolar ribonucleoprotein particle containing H/ACA-type snoRNAs (H/ACA snoRNPs). Component of the telomerase holoenzyme complex.

It localises to the nucleus. Its subcellular location is the nucleolus. Functionally, required for ribosome biogenesis. Part of a complex which catalyzes pseudouridylation of rRNA. This involves the isomerization of uridine such that the ribose is subsequently attached to C5, instead of the normal N1. Pseudouridine ('psi') residues may serve to stabilize the conformation of rRNAs. The chain is H/ACA ribonucleoprotein complex subunit 2-like protein from Branchiostoma belcheri (Amphioxus).